Reading from the N-terminus, the 130-residue chain is Small ribosomal subunit protein uS9 (130 aa).

Belongs to the universal ribosomal protein uS9 family.

The chain is Small ribosomal subunit protein uS9 from Haemophilus influenzae (strain 86-028NP).